The sequence spans 194 residues: Putative L,D-transpeptidase YciB (194 aa).

Positions 1-19 are cleaved as a signal peptide; that stretch reads MKLSLFIIAVLMPVILLSA. Cysteine 20 is lipidated: N-palmitoyl cysteine. Residue cysteine 20 is the site of S-diacylglycerol cysteine attachment. Positions 68-194 constitute a L,D-TPase catalytic domain; the sequence is VWIDVNVKEQ…IPEHTKVVIS (127 aa). The active-site Proton donor/acceptor is the histidine 144. The active-site Nucleophile is cysteine 170.

Belongs to the YkuD family.

It localises to the cell membrane. The protein operates within cell wall biogenesis; peptidoglycan biosynthesis. In Bacillus subtilis (strain 168), this protein is Putative L,D-transpeptidase YciB (yciB).